We begin with the raw amino-acid sequence, 561 residues long: Thymidine kinase (561 aa).

2 stretches are compositionally biased toward polar residues: residues 1–14 and 112–122; these read MASN…TPRR and LSSSNTASGLR. 2 disordered regions span residues 1–22 and 34–122; these read MASN…VPKA and FLTQ…SGLR. Position 245–252 (245–252) interacts with ATP; it reads GCMAAGKT. Glu-272 functions as the Proton acceptor in the catalytic mechanism. Gln-310 is a substrate binding site. An ATP-binding site is contributed by Arg-400. Arg-406 lines the substrate pocket.

The protein belongs to the herpesviridae thymidine kinase family. Homodimer.

It carries out the reaction thymidine + ATP = dTMP + ADP + H(+). In terms of biological role, catalyzes the transfer of the gamma-phospho group of ATP to thymidine to generate dTMP in the salvage pathway of pyrimidine synthesis. The dTMP serves as a substrate for DNA polymerase during viral DNA replication. Allows the virus to be reactivated and to grow in non-proliferative cells lacking a high concentration of phosphorylated nucleic acid precursors. This Connochaetes taurinus (Blue wildebeest) protein is Thymidine kinase.